The chain runs to 950 residues: Lon protease homolog, mitochondrial (950 aa).

The N-terminal 65 residues, 1 to 65 (MAASTGYVRL…VPMGGGQWRG (65 aa)), are a transit peptide targeting the mitochondrion. 2 disordered regions span residues 67-94 (WDAG…SGEG) and 212-243 (PEGL…LGAK). Positions 112–360 (LPLIAISRNP…KALSLLKKEF (249 aa)) constitute a Lon N-terminal domain. A compositionally biased stretch (basic residues) spans 224–233 (KSRRKLKRGK). 513-520 (GPPGVGKT) contributes to the ATP binding site. A Lon proteolytic domain is found at 749-939 (VTPPGVVMGL…RDIFRIAFPL (191 aa)). Residues Ser845 and Lys888 contribute to the active site.

Belongs to the peptidase S16 family. Homohexamer. Organized in a ring with a central cavity. The ATP-binding and proteolytic domains (AP-domain) form a hexameric chamber, while the N-terminal domain is arranged as a trimer of dimers. DNA and RNA binding is stimulated by substrate and inhibited by ATP binding. Interacts with TWNK and mitochondrial DNA polymerase subunit POLG.

It is found in the mitochondrion matrix. The enzyme catalyses Hydrolysis of proteins in presence of ATP.. Functionally, ATP-dependent serine protease that mediates the selective degradation of misfolded, unassembled or oxidatively damaged polypeptides as well as certain short-lived regulatory proteins in the mitochondrial matrix. Endogenous substrates include mitochondrial steroidogenic acute regulatory (StAR) protein, DELE1, helicase Twinkle (TWNK) and the large ribosomal subunit protein MRPL32/bL32m. MRPL32/bL32m is protected from degradation by LONP1 when it is bound to a nucleic acid (RNA), but TWNK is not. May also have a chaperone function in the assembly of inner membrane protein complexes. Participates in the regulation of mitochondrial gene expression and in the maintenance of the integrity of the mitochondrial genome. Binds to mitochondrial promoters and RNA in a single-stranded, site-specific, and strand-specific manner. May regulate mitochondrial DNA replication and/or gene expression using site-specific, single-stranded DNA binding to target the degradation of regulatory proteins binding to adjacent sites in mitochondrial promoters. This chain is Lon protease homolog, mitochondrial (Lonp1), found in Rattus norvegicus (Rat).